A 752-amino-acid chain; its full sequence is Probable cell surface ferric reductase kap2 (752 aa).

A helical transmembrane segment spans residues 40-60; it reads GKYGLGWVYFSVILLAISTII. Residues asparagine 118 and asparagine 133 are each glycosylated (N-linked (GlcNAc...) asparagine). 2 helical membrane passes run 157 to 177 and 195 to 215; these read IGFPSLGASSIILAALIFVTL and PPLAIRAGMIAVAMIPWIIAL. In terms of domain architecture, Ferric oxidoreductase spans 201–348; it reads AGMIAVAMIP…WATVAIWMLS (148 aa). Heme-binding residues include histidine 237 and histidine 251. 3 helical membrane-spanning segments follow: residues 241-261, 281-301, and 306-326; these read GYLCLFLSLIHMVPFYVTPIW, GTGWAALVPLIVLCLHSLPIL, and YELFKLVHLPLSIIFLAMIFW. Positions 313 and 327 each coordinate heme. A helical transmembrane segment spans residues 331-351; the sequence is FLASWDYLWATVAIWMLSYAV. The FAD-binding FR-type domain occupies 349 to 475; it reads YAVRLFYVNW…EGPYGGMKRD (127 aa). The N-linked (GlcNAc...) asparagine glycan is linked to asparagine 357. Residue 467 to 470 coordinates NADP(+); it reads GPYG. A helical transmembrane segment spans residues 482 to 502; the sequence is VVFFAGGSGITATASHLLNLI. Residue asparagine 627 is glycosylated (N-linked (GlcNAc...) asparagine). 714-715 contributes to the NADP(+) binding site; that stretch reads CG.

This sequence belongs to the ferric reductase (FRE) family. The cofactor is FAD. It depends on heme as a cofactor.

Its subcellular location is the cell membrane. It catalyses the reaction 2 a Fe(II)-siderophore + NADP(+) + H(+) = 2 a Fe(III)-siderophore + NADPH. Probable cell surface ferric reductase that acts as a negative regulatory factor of growth and development. Involved in kojic acid production through the regulation of kojA expression. The polypeptide is Probable cell surface ferric reductase kap2 (Aspergillus oryzae (strain ATCC 42149 / RIB 40) (Yellow koji mold)).